Consider the following 621-residue polypeptide: Chaperone protein HscA homolog (621 aa).

This sequence belongs to the heat shock protein 70 family.

Its function is as follows. Chaperone involved in the maturation of iron-sulfur cluster-containing proteins. Has a low intrinsic ATPase activity which is markedly stimulated by HscB. The sequence is that of Chaperone protein HscA homolog from Azotobacter vinelandii (strain DJ / ATCC BAA-1303).